The sequence spans 355 residues: DNA polymerase IV (355 aa).

The UmuC domain maps to Ile-4 to Gly-185. Mg(2+) contacts are provided by Asp-8 and Asp-103. The active site involves Glu-104.

This sequence belongs to the DNA polymerase type-Y family. As to quaternary structure, monomer. Mg(2+) is required as a cofactor.

Its subcellular location is the cytoplasm. The catalysed reaction is DNA(n) + a 2'-deoxyribonucleoside 5'-triphosphate = DNA(n+1) + diphosphate. Its function is as follows. Poorly processive, error-prone DNA polymerase involved in untargeted mutagenesis. Copies undamaged DNA at stalled replication forks, which arise in vivo from mismatched or misaligned primer ends. These misaligned primers can be extended by PolIV. Exhibits no 3'-5' exonuclease (proofreading) activity. May be involved in translesional synthesis, in conjunction with the beta clamp from PolIII. The polypeptide is DNA polymerase IV (Pasteurella multocida (strain Pm70)).